The primary structure comprises 390 residues: DNA polymerase IV (390 aa).

Residues 6–187 (VMHVDLDAFF…LDIAVMPGIG (182 aa)) form the UmuC domain. Residues Asp-10 and Asp-105 each contribute to the Mg(2+) site. Glu-106 is an active-site residue.

Belongs to the DNA polymerase type-Y family. In terms of assembly, monomer. Mg(2+) serves as cofactor.

It is found in the cytoplasm. It catalyses the reaction DNA(n) + a 2'-deoxyribonucleoside 5'-triphosphate = DNA(n+1) + diphosphate. Poorly processive, error-prone DNA polymerase involved in untargeted mutagenesis. Copies undamaged DNA at stalled replication forks, which arise in vivo from mismatched or misaligned primer ends. These misaligned primers can be extended by PolIV. Exhibits no 3'-5' exonuclease (proofreading) activity. May be involved in translesional synthesis, in conjunction with the beta clamp from PolIII. This Dehalococcoides mccartyi (strain ATCC BAA-2100 / JCM 16839 / KCTC 5957 / BAV1) protein is DNA polymerase IV.